A 273-amino-acid chain; its full sequence is Zinc finger protein 80 (273 aa).

2 consecutive C2H2-type zinc fingers follow at residues 49–71 (YKCK…QQIH) and 77–99 (YECQ…MRIH). The segment at 105–127 (CKCVECGKVFNRRSHLLCYRQIH) adopts a C2H2-type 3; atypical zinc-finger fold. 4 consecutive C2H2-type zinc fingers follow at residues 133 to 155 (YECS…RVTH), 161 to 183 (FGCK…MKIH), 189 to 211 (CKCS…SMTH), and 217 to 239 (YECK…TRSH).

Belongs to the krueppel C2H2-type zinc-finger protein family.

The protein resides in the nucleus. May be involved in transcriptional regulation. This Homo sapiens (Human) protein is Zinc finger protein 80 (ZNF80).